Here is a 647-residue protein sequence, read N- to C-terminus: MSSTEGGAKRVAEDGSEVSEAKRVGRIEGVAQLKPEYVVAGAAQLRAAESDEELTSERMVEPEGGTRKKSKKARGQNKNRDNRQAKEEHQLCPRLAQGNADACAFGAQCRYLHDVRTYLEHKTAEIECPQFTGCPVFAATGRCPMGFKCRFLSSHCNMETLELATTPEDERAKLWSVNHEVNHIASDRKLDLVKRRAPFPRSEHVLEIIDAIQQEFRDEMQGAAAAPEGAVAEVPQVQQREEQLSNKRARQRELYAQYHETRYFAQEKKPLDLHHKKIVSPLTTVGNLPFRRLMRQLGADVTYSEMALAVPLIQGTNSEWALPKAHCSELPGFGVQLACSKPWQAAKAAEALADNVGDGLSEINLNSGCPIDLLYRQGSGSALLDNPARMIRCLNAMNYVSKDVPVSVKLRTGTRDGHPIALGLCKRLVMETDVAAITLHGRTRQQRYTRSADWDYVGQVADALRSYETERAEKLKDREGKLRIQFVGNGDCNNWEDWYRHLENENVDSVMVARGALIKPWIFEEVDARQYIDKSSSERLEILRDYARFSMDHWGTDEYGIALCRRYFCEFMSFFHRYVPMGICERYPVLLNERPPNWRGRDDLETLLGSTDAADWIKLSEQFFGPTPDKFVFQPKHKSNSYAPSVQ.

2 disordered regions span residues 1–26 (MSST…RVGR) and 47–89 (AAES…KEEH). Basic and acidic residues-rich tracts occupy residues 7 to 26 (GAKR…RVGR) and 55 to 66 (TSERMVEPEGGT). The segment covering 67–77 (RKKSKKARGQN) has biased composition (basic residues). Over residues 78-89 (KNRDNRQAKEEH) the composition is skewed to basic and acidic residues. 2 C3H1-type zinc fingers span residues 86–116 (KEEH…HDVR) and 122–158 (KTAE…HCNM). Residues 281-283 (PLT) and Gln-336 each bind FMN. The active-site Proton donor is the Cys-369. FMN is bound by residues Lys-409, His-440, 489-491 (NGD), and 513-514 (AR).

Belongs to the Dus family. Dus3 subfamily. Requires FMN as cofactor.

The protein localises to the cytoplasm. It localises to the nucleus. The catalysed reaction is 5,6-dihydrouridine(47) in tRNA + NAD(+) = uridine(47) in tRNA + NADH + H(+). The enzyme catalyses 5,6-dihydrouridine(47) in tRNA + NADP(+) = uridine(47) in tRNA + NADPH + H(+). It carries out the reaction a 5,6-dihydrouridine in mRNA + NAD(+) = a uridine in mRNA + NADH + H(+). It catalyses the reaction a 5,6-dihydrouridine in mRNA + NADP(+) = a uridine in mRNA + NADPH + H(+). In terms of biological role, catalyzes the synthesis of dihydrouridine, a modified base found in the D-loop of most tRNAs. Specifically modifies U47 in cytoplasmic tRNAs. Catalyzes the synthesis of dihydrouridine in some mRNAs, thereby affecting their translation. This Eremothecium gossypii (strain ATCC 10895 / CBS 109.51 / FGSC 9923 / NRRL Y-1056) (Yeast) protein is tRNA-dihydrouridine(47) synthase [NAD(P)(+)] (DUS3).